We begin with the raw amino-acid sequence, 447 residues long: Putative vacuolar cation/proton exchanger 4 (447 aa).

The interval Met1–Glu29 is disordered. Over Met1–Lys65 the chain is Cytoplasmic. Over residues Asn10 to Ser22 the composition is skewed to polar residues. Residues Ile66 to Leu86 traverse the membrane as a helical segment. The Extracellular portion of the chain corresponds to Asn87–Tyr93. The chain crosses the membrane as a helical span at residues Gly94–Ala114. The Cytoplasmic segment spans residues Thr115–Glu122. A helical transmembrane segment spans residues Val123–Ala143. The tract at residues Gly132–Val167 is cation selection. The Extracellular segment spans residues Leu144 to Ser159. The helical transmembrane segment at Ile160–Gly180 threads the bilayer. Residues Lys181–Asp190 lie on the Cytoplasmic side of the membrane. Residues Ala191 to Leu211 form a helical membrane-spanning segment. The Extracellular segment spans residues His212–Glu224. Residues Leu225–Phe245 form a helical membrane-spanning segment. The Cytoplasmic segment spans residues Gln246–Arg286. A helical transmembrane segment spans residues Glu287–Val307. Topologically, residues Asp308–Asn318 are extracellular. Residues Ile319–Ala339 form a helical membrane-spanning segment. The interval Gly333 to Gly368 is cation selection. The Cytoplasmic segment spans residues Asn340–Ser353. The helical transmembrane segment at Leu354–Val374 threads the bilayer. The Extracellular segment spans residues Met375–Asp384. Residues Leu385–Leu405 traverse the membrane as a helical segment. Residues Leu406–Cys413 lie on the Cytoplasmic side of the membrane. The helical transmembrane segment at Val414–Ala434 threads the bilayer. The Extracellular segment spans residues Asp435–Asn447.

The protein belongs to the Ca(2+):cation antiporter (CaCA) (TC 2.A.19) family. Cation/proton exchanger (CAX) subfamily.

It is found in the vacuole membrane. Vacuolar cation/proton exchanger (CAX). Translocates Ca(2+) and other metal ions into vacuoles using the proton gradient formed by H(+)-ATPase and H(+)-pyrophosphatase. The chain is Putative vacuolar cation/proton exchanger 4 from Oryza sativa subsp. japonica (Rice).